A 226-amino-acid polypeptide reads, in one-letter code: Putative ABC transporter ATP-binding protein BH02760 (226 aa).

Residues 4-222 (IKFDKVTQVF…IPLVAIKEYI (219 aa)) enclose the ABC transporter domain. Residue 35–42 (GANGSGKS) coordinates ATP.

The protein belongs to the ABC transporter superfamily.

It localises to the cell inner membrane. Probably part of an ABC transporter complex. Responsible for energy coupling to the transport system. The chain is Putative ABC transporter ATP-binding protein BH02760 from Bartonella henselae (strain ATCC 49882 / DSM 28221 / CCUG 30454 / Houston 1) (Rochalimaea henselae).